A 544-amino-acid chain; its full sequence is Probable protein kinase UbiB (544 aa).

Residues 123–505 enclose the Protein kinase domain; that stretch reads EFDEQALASA…GRQKSHNVRS (383 aa). ATP-binding positions include 129-137 and Lys156; that span reads LASASIAQV. Asp291 functions as the Proton acceptor in the catalytic mechanism. Residues 522 to 540 form a helical membrane-spanning segment; the sequence is LPLWLSCGTLVTVLLVLLL.

It belongs to the ABC1 family. UbiB subfamily.

Its subcellular location is the cell inner membrane. It participates in cofactor biosynthesis; ubiquinone biosynthesis [regulation]. Its function is as follows. Is probably a protein kinase regulator of UbiI activity which is involved in aerobic coenzyme Q (ubiquinone) biosynthesis. The protein is Probable protein kinase UbiB of Actinobacillus pleuropneumoniae serotype 5b (strain L20).